A 179-amino-acid chain; its full sequence is Calcineurin subunit B type 2 (179 aa).

The N-myristoyl glycine moiety is linked to residue glycine 2. 4 EF-hand domains span residues 18–53, 57–85, 87–122, and 128–163; these read EEIR…QQNP, RVID…FSVK, DEEQ…MVGN, and QLQQ…MEIH. The Ca(2+) site is built by aspartate 31, aspartate 33, serine 35, serine 37, glutamate 42, aspartate 63, aspartate 65, asparagine 67, glutamate 69, glutamate 74, aspartate 100, aspartate 102, aspartate 104, and glutamate 111. The interval 131 to 136 is calcineurin A binding; the sequence is QLVDKS. Positions 141, 143, 145, 147, and 152 each coordinate Ca(2+).

It belongs to the calcineurin regulatory subunit family. Forms a complex composed of a calmodulin-dependent catalytic subunit (also known as calcineurin A) and a regulatory Ca(2+)-binding subunit (also known as calcineurin B). There are three catalytic subunits, each encoded by a separate gene (PPP3CA, PPP3CB, and PPP3CC) and two regulatory subunits which are also encoded by separate genes (PPP3R1 and PPP3R2). Interacts with SPATA33 (via PQIIIT motif). Expressed in osteoblasts and bone marrow (at protein level). Expressed in the testis. Expressed in the sperm midpiece in a SPATA33-dependent manner (at protein level).

Its subcellular location is the mitochondrion. Its function is as follows. Regulatory subunit of calcineurin, a calcium-dependent, calmodulin stimulated protein phosphatase. Confers calcium sensitivity. The chain is Calcineurin subunit B type 2 (Ppp3r2) from Mus musculus (Mouse).